A 57-amino-acid chain; its full sequence is MLRFVLVYIPVSVVSHTLCISLFIICSTRHTCFSKRYTCLLNICFCFFISSRIRNYF.

Disulfide bonds link C19–C39, C26–C44, and C32–C46.

This sequence belongs to the DEFL family.

The sequence is that of Defensin-like protein 302 from Arabidopsis thaliana (Mouse-ear cress).